Consider the following 352-residue polypeptide: Carbohydrate sulfotransferase 11 (352 aa).

The Cytoplasmic portion of the chain corresponds to 1–16 (MKPALLEVMRMNRICR). The chain crosses the membrane as a helical; Signal-anchor for type II membrane protein span at residues 17–37 (MVLATCLGSFILVIFYFQSML). The Lumenal portion of the chain corresponds to 38–352 (HPVMRRNPFG…YSVPNYLKLD (315 aa)). 3'-phosphoadenylyl sulfate is bound by residues 124–130 (PKVACTN) and 186–194 (REPFERLVS). 4 N-linked (GlcNAc...) asparagine glycosylation sites follow: asparagine 205, asparagine 223, asparagine 321, and asparagine 342.

It belongs to the sulfotransferase 2 family. N-glycosylated; required for activity and stability.

It localises to the golgi apparatus membrane. The catalysed reaction is chondroitin beta-D-glucuronate + n 3'-phosphoadenylyl sulfate = chondroitin 4'-sulfate + n adenosine 3',5'-bisphosphate + n H(+). In terms of biological role, catalyzes the transfer of sulfate to position 4 of the N-acetylgalactosamine (GalNAc) residue of chondroitin. Chondroitin sulfate constitutes the predominant proteoglycan present in cartilage and is distributed on the surfaces of many cells and extracellular matrices. Can also sulfate Gal residues in desulfated dermatan sulfate. Preferentially sulfates in GlcA-&gt;GalNAc unit than in IdoA-&gt;GalNAc unit. Does not form 4, 6-di-O-sulfated GalNAc when chondroitin sulfate C is used as an acceptor. In Rattus norvegicus (Rat), this protein is Carbohydrate sulfotransferase 11 (Chst11).